The sequence spans 315 residues: N-acetyl-gamma-glutamyl-phosphate reductase (315 aa).

Cys117 is a catalytic residue.

The protein belongs to the NAGSA dehydrogenase family. Type 2 subfamily.

It is found in the cytoplasm. The catalysed reaction is N-acetyl-L-glutamate 5-semialdehyde + phosphate + NADP(+) = N-acetyl-L-glutamyl 5-phosphate + NADPH + H(+). It participates in amino-acid biosynthesis; L-arginine biosynthesis; N(2)-acetyl-L-ornithine from L-glutamate: step 3/4. Functionally, catalyzes the NADPH-dependent reduction of N-acetyl-5-glutamyl phosphate to yield N-acetyl-L-glutamate 5-semialdehyde. The protein is N-acetyl-gamma-glutamyl-phosphate reductase of Burkholderia ambifaria (strain ATCC BAA-244 / DSM 16087 / CCUG 44356 / LMG 19182 / AMMD) (Burkholderia cepacia (strain AMMD)).